The following is a 519-amino-acid chain: Anthranilate synthase component 1 (519 aa).

Residues Thr40 and 293 to 295 (PYM) contribute to the L-tryptophan site. 330 to 331 (GT) contributes to the chorismate binding site. Glu363 is a Mg(2+) binding site. Chorismate-binding positions include Tyr451, Arg471, 485-487 (GSG), and Gly487. Glu500 is a binding site for Mg(2+).

Belongs to the anthranilate synthase component I family. Heterotetramer consisting of two non-identical subunits: a beta subunit (TrpG) and a large alpha subunit (TrpE). Mg(2+) serves as cofactor.

The catalysed reaction is chorismate + L-glutamine = anthranilate + pyruvate + L-glutamate + H(+). It participates in amino-acid biosynthesis; L-tryptophan biosynthesis; L-tryptophan from chorismate: step 1/5. With respect to regulation, feedback inhibited by tryptophan. Its function is as follows. Part of a heterotetrameric complex that catalyzes the two-step biosynthesis of anthranilate, an intermediate in the biosynthesis of L-tryptophan. In the first step, the glutamine-binding beta subunit (TrpG) of anthranilate synthase (AS) provides the glutamine amidotransferase activity which generates ammonia as a substrate that, along with chorismate, is used in the second step, catalyzed by the large alpha subunit of AS (TrpE) to produce anthranilate. In the absence of TrpG, TrpE can synthesize anthranilate directly from chorismate and high concentrations of ammonia. The protein is Anthranilate synthase component 1 (trpE) of Buchnera aphidicola subsp. Diuraphis noxia.